The primary structure comprises 138 residues: Transcription antitermination protein NusB (138 aa).

This sequence belongs to the NusB family.

Functionally, involved in transcription antitermination. Required for transcription of ribosomal RNA (rRNA) genes. Binds specifically to the boxA antiterminator sequence of the ribosomal RNA (rrn) operons. In Colwellia psychrerythraea (strain 34H / ATCC BAA-681) (Vibrio psychroerythus), this protein is Transcription antitermination protein NusB.